Here is a 340-residue protein sequence, read N- to C-terminus: C5a anaphylatoxin chemotactic receptor 1 (340 aa).

The Extracellular segment spans residues 1–30 (TPDYGHYDDKDTLDANTPVDKTSNTLRVPD). The interval 3–11 (DYGHYDDKD) is required for CHIPS binding. Sulfotyrosine occurs at positions 4 and 7. The segment at 14 to 23 (DANTPVDKTS) is involved in C5a binding. A helical membrane pass occupies residues 31–57 (ILALVIFAVVFLVGVLRNALVVWVTAF). Residues 58–62 (EAKRT) are Cytoplasmic-facing. Residues 63 to 86 (INAIWFLNLAVADFLSCLALPILF) form a helical membrane-spanning segment. Residues 87–103 (TSIVQHHHWPFGGAACR) lie on the Extracellular side of the membrane. Cysteine 102 and cysteine 181 are joined by a disulfide. A helical membrane pass occupies residues 104-125 (ILPSLILLNMYASILLLATISA). The Cytoplasmic portion of the chain corresponds to 126–146 (DRFLLVFNPIWCQNFRGAGLA). The chain crosses the membrane as a helical span at residues 147-167 (WIACAVAWGLALLLTIPSFLY). Over 168–193 (RVVREEYFPPKVLCGVDHGHDKRRER) the chain is Extracellular. A helical transmembrane segment spans residues 194–219 (AVAIARLVLGFVWPLLTLTMCYTFLL). The Cytoplasmic portion of the chain corresponds to 220–235 (LRTWSRRATRSTKTLK). Residues 236 to 258 (VVVAVVASFFIFWLPYQVTGMMM) traverse the membrane as a helical segment. Over 259 to 275 (SFLEPSSPTFLLLKKLD) the chain is Extracellular. Residues 276–296 (SLCISFAYINCCINPIIYVVA) traverse the membrane as a helical segment. At 297-340 (GQGFQGRLRKSLPSLLRNVLTEESMVRESKSFTRSTVDTMAQKT) the chain is on the cytoplasmic side. Phosphoserine occurs at positions 307, 310, 320, 325, 327, and 331.

This sequence belongs to the G-protein coupled receptor 1 family. In terms of assembly, homodimer. May also form higher-order oligomers. Interacts (when phosphorylated) with ARRB1 and ARRB2; the interaction is associated with internalization of C5aR. Interacts (via N-terminal domain) with S.aureus chemotaxis inhibitory protein (CHIPS); the interaction blocks the receptor and may thus inhibit the immune response. Post-translationally, sulfation plays a critical role in the association of C5aR with C5a, but no significant role in the ability of the receptor to transduce a signal and mobilize calcium in response to a small peptide agonist. Sulfation at Tyr-7 is important for CHIPS binding. In terms of processing, phosphorylated on serine residues in response to C5a binding, resulting in internalization of the receptor and short-term desensitization to C5a.

Its subcellular location is the cell membrane. The protein resides in the cytoplasmic vesicle. In terms of biological role, receptor for the chemotactic and inflammatory peptide anaphylatoxin C5a. The ligand interacts with at least two sites on the receptor: a high-affinity site on the extracellular N-terminus, and a second site in the transmembrane region which activates downstream signaling events. Receptor activation stimulates chemotaxis, granule enzyme release, intracellular calcium release and superoxide anion production. The protein is C5a anaphylatoxin chemotactic receptor 1 (C5AR1) of Macaca mulatta (Rhesus macaque).